A 437-amino-acid chain; its full sequence is Serine hydroxymethyltransferase (437 aa).

(6S)-5,6,7,8-tetrahydrofolate-binding positions include leucine 130 and 134 to 136; that span reads GHL. Lysine 239 carries the N6-(pyridoxal phosphate)lysine modification.

Belongs to the SHMT family. As to quaternary structure, homodimer. Requires pyridoxal 5'-phosphate as cofactor.

Its subcellular location is the cytoplasm. It carries out the reaction (6R)-5,10-methylene-5,6,7,8-tetrahydrofolate + glycine + H2O = (6S)-5,6,7,8-tetrahydrofolate + L-serine. The protein operates within one-carbon metabolism; tetrahydrofolate interconversion. It participates in amino-acid biosynthesis; glycine biosynthesis; glycine from L-serine: step 1/1. In terms of biological role, catalyzes the reversible interconversion of serine and glycine with tetrahydrofolate (THF) serving as the one-carbon carrier. This reaction serves as the major source of one-carbon groups required for the biosynthesis of purines, thymidylate, methionine, and other important biomolecules. Also exhibits THF-independent aldolase activity toward beta-hydroxyamino acids, producing glycine and aldehydes, via a retro-aldol mechanism. In Bartonella tribocorum (strain CIP 105476 / IBS 506), this protein is Serine hydroxymethyltransferase.